The primary structure comprises 334 residues: GTP 3',8-cyclase (334 aa).

Positions 13 to 239 constitute a Radical SAM core domain; the sequence is RFHRKFYYLR…KVKAANDGPA (227 aa). Residue Arg-22 coordinates GTP. Residues Cys-29 and Cys-33 each contribute to the [4Fe-4S] cluster site. Tyr-35 contributes to the S-adenosyl-L-methionine binding site. Cys-36 is a binding site for [4Fe-4S] cluster. Arg-73 is a GTP binding site. Residue Gly-77 participates in S-adenosyl-L-methionine binding. Position 104 (Thr-104) interacts with GTP. S-adenosyl-L-methionine is bound at residue Ser-128. Lys-165 lines the GTP pocket. Met-199 provides a ligand contact to S-adenosyl-L-methionine. Positions 262 and 265 each coordinate [4Fe-4S] cluster. Residue 267–269 coordinates GTP; that stretch reads RLR. Cys-279 is a [4Fe-4S] cluster binding site.

Belongs to the radical SAM superfamily. MoaA family. In terms of assembly, monomer and homodimer. The cofactor is [4Fe-4S] cluster.

The enzyme catalyses GTP + AH2 + S-adenosyl-L-methionine = (8S)-3',8-cyclo-7,8-dihydroguanosine 5'-triphosphate + 5'-deoxyadenosine + L-methionine + A + H(+). The protein operates within cofactor biosynthesis; molybdopterin biosynthesis. Functionally, catalyzes the cyclization of GTP to (8S)-3',8-cyclo-7,8-dihydroguanosine 5'-triphosphate. This chain is GTP 3',8-cyclase, found in Vibrio vulnificus (strain YJ016).